The primary structure comprises 274 residues: UPF0173 metal-dependent hydrolase AnaeK_1127 (274 aa).

It belongs to the UPF0173 family.

This chain is UPF0173 metal-dependent hydrolase AnaeK_1127, found in Anaeromyxobacter sp. (strain K).